Consider the following 193-residue polypeptide: MKLLEERIIKDGNVLGENILKVDSFLTHQVDYHLMRDIGKVFAESYADAGITKVVTIEASGIAPAVYVAEALKVPMIFAKKHKNITMTEGILTAEVYSFTKQVTSTVSIASKFLSKDDKVLIIDDFLANGQAAKGLIEIIQQAGASVEGVGIVIEKSFQDGRQLLENMGVKVTSLARIKNFENGRLNFMEADA.

Xanthine-binding residues include Leu-20 and Thr-27. Residue 128–132 (ANGQA) participates in 5-phospho-alpha-D-ribose 1-diphosphate binding. Xanthine is bound at residue Lys-156.

This sequence belongs to the purine/pyrimidine phosphoribosyltransferase family. Xpt subfamily. Homodimer.

The protein localises to the cytoplasm. The enzyme catalyses XMP + diphosphate = xanthine + 5-phospho-alpha-D-ribose 1-diphosphate. It functions in the pathway purine metabolism; XMP biosynthesis via salvage pathway; XMP from xanthine: step 1/1. Functionally, converts the preformed base xanthine, a product of nucleic acid breakdown, to xanthosine 5'-monophosphate (XMP), so it can be reused for RNA or DNA synthesis. The protein is Xanthine phosphoribosyltransferase of Streptococcus uberis (strain ATCC BAA-854 / 0140J).